A 155-amino-acid polypeptide reads, in one-letter code: Small ribosomal subunit protein uS7 (155 aa).

Belongs to the universal ribosomal protein uS7 family. As to quaternary structure, part of the 30S ribosomal subunit. Contacts proteins S9 and S11.

Functionally, one of the primary rRNA binding proteins, it binds directly to 16S rRNA where it nucleates assembly of the head domain of the 30S subunit. Is located at the subunit interface close to the decoding center, probably blocks exit of the E-site tRNA. This is Small ribosomal subunit protein uS7 from Chloroherpeton thalassium (strain ATCC 35110 / GB-78).